The sequence spans 377 residues: uncharacterized protein (377 aa).

Disordered stretches follow at residues 10–79 (YSDG…NVNN), 91–141 (KKNN…DKEE), 182–257 (EAKK…TTTT), 265–284 (ENEN…EPIE), and 289–326 (LEFN…KEEP). Composition is skewed to low complexity over residues 14-24 (IPQPTITPPTQ), 46-79 (NKNN…NVNN), and 93-124 (NNNN…FNDN). Composition is skewed to basic and acidic residues over residues 182–196 (EAKK…KRGE) and 209–218 (QTPDKKKKLE). The span at 221–257 (TSKNNNKSSTTKTELTNTTTNTSSTTNPTTDTTTTTT) shows a compositional bias: low complexity. Composition is skewed to basic and acidic residues over residues 265-274 (ENENQEKENN) and 292-303 (NKFEEKPIKEVK). Basic residues predominate over residues 311–320 (KRNKKRNNPK).

This is an uncharacterized protein from Dictyostelium discoideum (Social amoeba).